A 239-amino-acid chain; its full sequence is Purine nucleoside phosphorylase DeoD-type (239 aa).

An a purine D-ribonucleoside-binding site is contributed by His5. The phosphate site is built by Gly21 and Arg25. Lys27 is modified (N6-acetyllysine). Residues Arg44 and 88-91 each bind phosphate; that span reads RVGS. Residues 180–182 and 204–205 each bind a purine D-ribonucleoside; these read EME and SD. The active-site Proton donor is the Asp205.

Belongs to the PNP/UDP phosphorylase family. In terms of assembly, homohexamer; trimer of homodimers.

It carries out the reaction a purine D-ribonucleoside + phosphate = a purine nucleobase + alpha-D-ribose 1-phosphate. It catalyses the reaction a purine 2'-deoxy-D-ribonucleoside + phosphate = a purine nucleobase + 2-deoxy-alpha-D-ribose 1-phosphate. In terms of biological role, catalyzes the reversible phosphorolytic breakdown of the N-glycosidic bond in the beta-(deoxy)ribonucleoside molecules, with the formation of the corresponding free purine bases and pentose-1-phosphate. In Shigella dysenteriae serotype 1 (strain Sd197), this protein is Purine nucleoside phosphorylase DeoD-type.